Consider the following 140-residue polypeptide: UPF0102 protein Ppro_1186 (140 aa).

Positions 1–27 (MKRPGDGRQESPSSTARPDNRNTGSRG) are disordered. Positions 10–25 (ESPSSTARPDNRNTGS) are enriched in polar residues.

It belongs to the UPF0102 family.

The polypeptide is UPF0102 protein Ppro_1186 (Pelobacter propionicus (strain DSM 2379 / NBRC 103807 / OttBd1)).